The chain runs to 205 residues: Large ribosomal subunit protein uL3 (205 aa).

Belongs to the universal ribosomal protein uL3 family. In terms of assembly, part of the 50S ribosomal subunit. Forms a cluster with proteins L14 and L19.

Its function is as follows. One of the primary rRNA binding proteins, it binds directly near the 3'-end of the 23S rRNA, where it nucleates assembly of the 50S subunit. The chain is Large ribosomal subunit protein uL3 from Parabacteroides distasonis (strain ATCC 8503 / DSM 20701 / CIP 104284 / JCM 5825 / NCTC 11152).